The sequence spans 360 residues: Mitogen-activated protein kinase 1 (360 aa).

An N-acetylalanine modification is found at A2. One can recognise a Protein kinase domain in the interval 25-313 (YTNLSYIGEG…VEQALAHPYL (289 aa)). S29 carries the post-translational modification Phosphoserine; by SGK1. Residues 31-39 (IGEGAYGMV) and K54 each bind ATP. The Proton acceptor role is filled by D149. T185 is modified (phosphothreonine; by MAP2K1 and MAP2K2). The TXY motif lies at 185–187 (TEY). Phosphotyrosine; by MAP2K1 and MAP2K2 is present on Y187. T190 carries the post-translational modification Phosphothreonine; by autocatalysis. A phosphoserine mark is found at S246 and S248. Residues 259–277 (KARNYLLSLPHKNKVPWNR) mediate DNA binding. Residue S284 is modified to Phosphoserine. The short motif at 318 to 322 (DPSDE) is the Cytoplasmic retention motif element. Positions 327–333 (APFKFDM) match the Nuclear translocation motif motif.

Belongs to the protein kinase superfamily. CMGC Ser/Thr protein kinase family. MAP kinase subfamily. In terms of assembly, binds both upstream activators and downstream substrates in multimolecular complexes. This interaction inhibits its tyrosine-kinase activity. Interacts with ADAM15, ARHGEF2, ARRB2, DAPK1 (via death domain), HSF4, IER3, IPO7, NISCH, SGK1, and isoform 1 of NEK2. Interacts (via phosphorylated form) with TPR (via C-terminal region and phosphorylated form); the interaction requires dimerization of MAPK1/ERK2 and increases following EGF stimulation. Interacts with MAP2K1. Interacts with DUSP6. Interacts (phosphorylated form) with CAV2 ('Tyr-19'-phosphorylated form); the interaction, promoted by insulin, leads to nuclear location and MAPK1 activation. Interacts with MORG1, PEA15 and MKNK2. MKNK2 isoform 1 binding prevents from dephosphorylation and inactivation. Interacts with DCC. The phosphorylated form interacts with PML (isoform PML-4). Interacts with STYX. Interacts with CDK2AP2. Interacts with CAVIN4. Interacts with DUSP7; the interaction enhances DUSP7 phosphatase activity. Interacts with GIT1; this interaction is necessary for MAPK1 localization to focal adhesions. Interacts with ZNF263. Interacts with phosphoglycerate kinase PGK1; the interaction is direct, occurs under hypoxic conditions, and promotes interaction between PGK1 and PIN1. As to quaternary structure, (Microbial infection) Interacts with HIV-1 Nef through its SH3 domain. The cofactor is Mg(2+). Post-translationally, phosphorylated upon KIT and FLT3 signaling. Dually phosphorylated on Thr-185 and Tyr-187, which activates the enzyme. Undergoes regulatory phosphorylation on additional residues such as Ser-246 and Ser-248 in the kinase insert domain (KID) These phosphorylations, which are probably mediated by more than one kinase, are important for binding of MAPK1/ERK2 to importin-7 (IPO7) and its nuclear translocation. In addition, autophosphorylation of Thr-190 was shown to affect the subcellular localization of MAPK1/ERK2 as well. Ligand-activated ALK induces tyrosine phosphorylation. Dephosphorylated by PTPRJ at Tyr-187. Phosphorylation on Ser-29 by SGK1 results in its activation by enhancing its interaction with MAP2K1/MEK1 and MAP2K2/MEK2. DUSP3 and DUSP6 dephosphorylate specifically MAPK1/ERK2 and MAPK3/ERK1 whereas DUSP9 dephosphorylates a broader range of MAPKs. Dephosphorylated by DUSP1 and DUSP2 at Thr-185 and Tyr-187. ISGylated. In terms of processing, ubiquitinated by TRIM15 via 'Lys-63'-linked ubiquitination; leading to activation. Deubiquitinated by CYLD.

The protein localises to the cytoplasm. It is found in the cytoskeleton. Its subcellular location is the spindle. It localises to the nucleus. The protein resides in the microtubule organizing center. The protein localises to the centrosome. It is found in the membrane. Its subcellular location is the caveola. It localises to the cell junction. The protein resides in the focal adhesion. It catalyses the reaction L-seryl-[protein] + ATP = O-phospho-L-seryl-[protein] + ADP + H(+). The catalysed reaction is L-threonyl-[protein] + ATP = O-phospho-L-threonyl-[protein] + ADP + H(+). Its activity is regulated as follows. Phosphorylated by MAP2K1/MEK1 and MAP2K2/MEK2 on Thr-185 and Tyr-187 in response to external stimuli like insulin or NGF. Both phosphorylations are required for activity. This phosphorylation causes dramatic conformational changes, which enable full activation and interaction of MAPK1/ERK2 with its substrates. Phosphorylation on Ser-29 by SGK1 results in its activation by enhancing its interaction with MAP2K1/MEK1 and MAP2K2/MEK2. Dephosphorylated and inactivated by DUSP1, DUSP3, DUSP6 and DUSP9. Inactivated by pyrimidylpyrrole inhibitors. In terms of biological role, serine/threonine kinase which acts as an essential component of the MAP kinase signal transduction pathway. MAPK1/ERK2 and MAPK3/ERK1 are the 2 MAPKs which play an important role in the MAPK/ERK cascade. They participate also in a signaling cascade initiated by activated KIT and KITLG/SCF. Depending on the cellular context, the MAPK/ERK cascade mediates diverse biological functions such as cell growth, adhesion, survival and differentiation through the regulation of transcription, translation, cytoskeletal rearrangements. The MAPK/ERK cascade also plays a role in initiation and regulation of meiosis, mitosis, and postmitotic functions in differentiated cells by phosphorylating a number of transcription factors. About 160 substrates have already been discovered for ERKs. Many of these substrates are localized in the nucleus, and seem to participate in the regulation of transcription upon stimulation. However, other substrates are found in the cytosol as well as in other cellular organelles, and those are responsible for processes such as translation, mitosis and apoptosis. Moreover, the MAPK/ERK cascade is also involved in the regulation of the endosomal dynamics, including lysosome processing and endosome cycling through the perinuclear recycling compartment (PNRC); as well as in the fragmentation of the Golgi apparatus during mitosis. The substrates include transcription factors (such as ATF2, BCL6, ELK1, ERF, FOS, HSF4 or SPZ1), cytoskeletal elements (such as CANX, CTTN, GJA1, MAP2, MAPT, PXN, SORBS3 or STMN1), regulators of apoptosis (such as BAD, BTG2, CASP9, DAPK1, IER3, MCL1 or PPARG), regulators of translation (such as EIF4EBP1 and FXR1) and a variety of other signaling-related molecules (like ARHGEF2, DCC, FRS2 or GRB10). Protein kinases (such as RAF1, RPS6KA1/RSK1, RPS6KA3/RSK2, RPS6KA2/RSK3, RPS6KA6/RSK4, SYK, MKNK1/MNK1, MKNK2/MNK2, RPS6KA5/MSK1, RPS6KA4/MSK2, MAPKAPK3 or MAPKAPK5) and phosphatases (such as DUSP1, DUSP4, DUSP6 or DUSP16) are other substrates which enable the propagation the MAPK/ERK signal to additional cytosolic and nuclear targets, thereby extending the specificity of the cascade. Mediates phosphorylation of TPR in response to EGF stimulation. May play a role in the spindle assembly checkpoint. Phosphorylates PML and promotes its interaction with PIN1, leading to PML degradation. Phosphorylates CDK2AP2. Phosphorylates phosphoglycerate kinase PGK1 under hypoxic conditions to promote its targeting to the mitochondrion and suppress the formation of acetyl-coenzyme A from pyruvate. Its function is as follows. Acts as a transcriptional repressor. Binds to a [GC]AAA[GC] consensus sequence. Repress the expression of interferon gamma-induced genes. Seems to bind to the promoter of CCL5, DMP1, IFIH1, IFITM1, IRF7, IRF9, LAMP3, OAS1, OAS2, OAS3 and STAT1. Transcriptional activity is independent of kinase activity. The protein is Mitogen-activated protein kinase 1 of Homo sapiens (Human).